The sequence spans 316 residues: MQRRTRGIDTGLLLLLSQVFHIGINNIPPVTLATLAVNVWFFLNPWKPLYHSCISVEKCYQQNDWQRLLLSPVHHGDDWHLYFNMVSMLWKGVKLEKRLGSRWFAYIIATFSLLTGVVYLLLQFASAELMNQPDFKRNCAVGFSGVLFALKVLSNHYCPGGFVNILGFPVPNRFACWAELAAIHFCTPGTSFAGHLAGILVGLMYTQGPLKKIMDACAGIFISNAGSSGQQYHFNNAGPSGYQNRYTDGRPVNYEATYRNYDIYTAGLSEEEQLERALRASIWDRGNTRNGPIPYGFRLPPEEEMRRQRLHRFDGQ.

Residues 1 to 21 (MQRRTRGIDTGLLLLLSQVFH) lie on the Cytoplasmic side of the membrane. Residues 22-42 (IGINNIPPVTLATLAVNVWFF) form a helical membrane-spanning segment. Residues 43–103 (LNPWKPLYHS…KLEKRLGSRW (61 aa)) are Extracellular-facing. Residues 104 to 124 (FAYIIATFSLLTGVVYLLLQF) form a helical membrane-spanning segment. Over 125 to 137 (ASAELMNQPDFKR) the chain is Cytoplasmic. A helical transmembrane segment spans residues 138–154 (NCAVGFSGVLFALKVLS). Residue Ser144 is the Nucleophile of the active site. At 155–182 (NHYCPGGFVNILGFPVPNRFACWAELAA) the chain is on the extracellular side. A helical membrane pass occupies residues 183–203 (IHFCTPGTSFAGHLAGILVGL). The active site involves His195. Residues 204–316 (MYTQGPLKKI…RQRLHRFDGQ (113 aa)) lie on the Cytoplasmic side of the membrane. Residues 269–284 (SEEEQLERALRASIWD) form a ubiquitin-binding domain (UBD) region. Residues 301–316 (PEEEMRRQRLHRFDGQ) form a VCP/p97-interacting motif (VIM) region.

The protein belongs to the peptidase S54 family. As to quaternary structure, interacts with BIK and STEAP3. Interacts (via C-terminal domain) with VCP. Interacts with ubiquitin and ubiquitinated proteins. Expressed in intestine, lung, brain, kidney, epididymis and testis.

The protein resides in the endoplasmic reticulum membrane. Its subcellular location is the mitochondrion membrane. It catalyses the reaction Cleaves type-1 transmembrane domains using a catalytic dyad composed of serine and histidine that are contributed by different transmembrane domains.. Inhibited by aprotinin. Functionally, intramembrane-cleaving serine protease that cleaves single transmembrane or multi-pass membrane proteins in the hydrophobic plane of the membrane, luminal loops and juxtamembrane regions. Involved in regulated intramembrane proteolysis and the subsequent release of functional polypeptides from their membrane anchors. Functional component of endoplasmic reticulum-associated degradation (ERAD) for misfolded membrane proteins. Required for the degradation process of some specific misfolded endoplasmic reticulum (ER) luminal proteins. Participates in the transfer of misfolded proteins from the ER to the cytosol, where they are destroyed by the proteasome in a ubiquitin-dependent manner. Functions in BIK, MPZ, PKD1, PTCRA, RHO, STEAP3 and TRAC processing. Involved in the regulation of exosomal secretion; inhibits the TSAP6-mediated secretion pathway. Involved in the regulation of apoptosis; modulates BIK-mediated apoptotic activity. Also plays a role in the regulation of spermatogenesis; inhibits apoptotic activity in spermatogonia. In Rattus norvegicus (Rat), this protein is Rhomboid-related protein 4 (Rhbdd1).